Consider the following 121-residue polypeptide: Large ribosomal subunit protein bL12 (121 aa).

Belongs to the bacterial ribosomal protein bL12 family. As to quaternary structure, homodimer. Part of the ribosomal stalk of the 50S ribosomal subunit. Forms a multimeric L10(L12)X complex, where L10 forms an elongated spine to which 2 to 4 L12 dimers bind in a sequential fashion. Binds GTP-bound translation factors.

Functionally, forms part of the ribosomal stalk which helps the ribosome interact with GTP-bound translation factors. Is thus essential for accurate translation. The polypeptide is Large ribosomal subunit protein bL12 (Streptococcus agalactiae serotype V (strain ATCC BAA-611 / 2603 V/R)).